The following is a 132-amino-acid chain: Protein LEKR1 (132 aa).

Residues 37-116 (FKAMEEKVKA…KKQLSHLQDE (80 aa)) are a coiled coil.

The polypeptide is Protein LEKR1 (LEKR1) (Homo sapiens (Human)).